The chain runs to 336 residues: O-methyltransferase 2 (336 aa).

The S-adenosyl-L-methionine site is built by G170, D198, N221, F222, and K237. H241 (proton acceptor) is an active-site residue.

The protein belongs to the class I-like SAM-binding methyltransferase superfamily. Cation-independent O-methyltransferase family. COMT subfamily.

It carries out the reaction (3,5-dichloro-2,4,6-trihydroxyphenyl)hexan-1-one + S-adenosyl-L-methionine = 1-(3,5-dichloro-2,6-dihydroxy-4-methoxyphenyl)hexan-1-one + S-adenosyl-L-homocysteine + H(+). The polypeptide is O-methyltransferase 2 (omt2) (Dictyostelium discoideum (Social amoeba)).